The chain runs to 499 residues: NADH-quinone oxidoreductase subunit 14 (499 aa).

The next 14 membrane-spanning stretches (helical) occupy residues 9–29, 37–57, 76–96, 104–124, 126–146, 161–181, 196–216, 235–255, 269–289, 301–321, 324–344, 369–389, 402–422, and 446–466; these read ILPE…GAYL, TLLW…GLGN, FAKV…ADYM, FEFP…VSAG, LLTL…VAAM, FVLG…VYGF, AGHL…GLSF, PTPV…ALIA, WSQI…IAGI, SSIA…AIGV, MLLY…FILS, ALAM…LGFF, GMGW…FYYL, and YLAL…MFGV.

This sequence belongs to the complex I subunit 2 family. NDH-1 is composed of at least 14 different subunits, Nqo1 to Nqo14. The complex has a L-shaped structure, with the hydrophobic arm (subunits Nqo7, Nqo8, Nqo10 to Nqo14) embedded in the inner membrane and the hydrophilic peripheral arm (subunits Nqo1 to Nqo6, Nqo9) protruding into the bacterial cytoplasm. The hydrophilic domain contains all the redox centers.

It is found in the cell inner membrane. The enzyme catalyses a quinone + NADH + 5 H(+)(in) = a quinol + NAD(+) + 4 H(+)(out). NDH-1 shuttles electrons from NADH, via FMN and iron-sulfur (Fe-S) centers, to quinones in the respiratory chain. The immediate electron acceptor for the enzyme in this species is believed to be ubiquinone. Couples the redox reaction to proton translocation (for every two electrons transferred, four hydrogen ions are translocated across the cytoplasmic membrane), and thus conserves the redox energy in a proton gradient. This is NADH-quinone oxidoreductase subunit 14 from Paracoccus denitrificans.